The primary structure comprises 232 residues: Ubiquinone biosynthesis O-methyltransferase (232 aa).

S-adenosyl-L-methionine-binding residues include Arg36, Gly55, Asp76, and Met120.

Belongs to the methyltransferase superfamily. UbiG/COQ3 family.

It catalyses the reaction a 3-demethylubiquinol + S-adenosyl-L-methionine = a ubiquinol + S-adenosyl-L-homocysteine + H(+). It carries out the reaction a 3-(all-trans-polyprenyl)benzene-1,2-diol + S-adenosyl-L-methionine = a 2-methoxy-6-(all-trans-polyprenyl)phenol + S-adenosyl-L-homocysteine + H(+). It participates in cofactor biosynthesis; ubiquinone biosynthesis. In terms of biological role, O-methyltransferase that catalyzes the 2 O-methylation steps in the ubiquinone biosynthetic pathway. The chain is Ubiquinone biosynthesis O-methyltransferase from Burkholderia thailandensis (strain ATCC 700388 / DSM 13276 / CCUG 48851 / CIP 106301 / E264).